A 221-amino-acid chain; its full sequence is Pleckstrin homology domain-containing family B member 2 (221 aa).

The 108-residue stretch at 2 to 109 folds into the PH domain; the sequence is AFVKSGWLLR…WKFTLQDSRT (108 aa). An a 1,2-diacyl-sn-glycero-3-phospho-L-serine-binding site is contributed by Lys20.

Highly expressed in brain, retina, heart and kidney. Detected at lower levels in lung, muscle and nerve.

The protein resides in the recycling endosome membrane. Functionally, involved in retrograde transport of recycling endosomes. This is Pleckstrin homology domain-containing family B member 2 (Plekhb2) from Mus musculus (Mouse).